The chain runs to 168 residues: Large ribosomal subunit protein bL9 (168 aa).

The disordered stretch occupies residues 149–168 (QSFEEEPAPEAPAEEAEAAE). Positions 152–168 (EEEPAPEAPAEEAEAAE) are enriched in acidic residues.

This sequence belongs to the bacterial ribosomal protein bL9 family.

Functionally, binds to the 23S rRNA. This Desulfovibrio desulfuricans (strain ATCC 27774 / DSM 6949 / MB) protein is Large ribosomal subunit protein bL9.